The sequence spans 520 residues: Sodium-dependent dicarboxylate transporter SdcS (520 aa).

The next 14 membrane-spanning stretches (helical) occupy residues 30–50 (TGQL…LLFF), 55–75 (LPWK…WWIT), 77–97 (AIPI…GHIL), 104–124 (SEYG…AIAM), 160–180 (SMFV…LAII), 207–227 (IGYA…PLII), 242–262 (FAKW…ITWL), 298–318 (KVVQ…EFLL), 323–343 (VTSS…LFII), 362–382 (ELPW…KGIS), 399–419 (GVSP…LTEV), 428–448 (MILP…LLLM), 452–472 (AMAA…AIIF), and 491–511 (LISA…VLGI).

The protein belongs to the SLC13A/DASS transporter (TC 2.A.47) family. NADC subfamily.

The protein resides in the cell membrane. In terms of biological role, mediates the transport of the dicarboxylates fumarate, malate, and succinate across the cytoplasmic membrane via a Na(+)-electrochemical gradient. This is Sodium-dependent dicarboxylate transporter SdcS (sdcS) from Staphylococcus aureus (strain MRSA252).